The chain runs to 142 residues: Hemoglobin subunit alpha-2 (142 aa).

One can recognise a Globin domain in the interval 2-142 (VLSPADKTNV…VSTVLTSKYR (141 aa)). H59 lines the O2 pocket. Residue H88 participates in heme b binding.

Belongs to the globin family. In terms of assembly, heterotetramer of two alpha chains and two beta chains. As to expression, red blood cells.

Involved in oxygen transport from the lung to the various peripheral tissues. Functionally, hemopressin acts as an antagonist peptide of the cannabinoid receptor CNR1. Hemopressin-binding efficiently blocks cannabinoid receptor CNR1 and subsequent signaling. The polypeptide is Hemoglobin subunit alpha-2 (HBA2) (Hylobates lar (Lar gibbon)).